The primary structure comprises 400 residues: Diphosphomevalonate decarboxylase (400 aa).

Position 2 is an N-acetylalanine (alanine 2). (R)-5-diphosphomevalonate-binding positions include 23–26 (YWGK) and arginine 78. A Phosphoserine modification is found at serine 96. (R)-5-diphosphomevalonate is bound by residues 156–161 (SGSACR) and threonine 212.

It belongs to the diphosphomevalonate decarboxylase family. In terms of assembly, homodimer. As to expression, expressed in heart, skeletal muscle, lung, liver, brain, pancreas, kidney and placenta.

The protein localises to the cytoplasm. The enzyme catalyses (R)-5-diphosphomevalonate + ATP = isopentenyl diphosphate + ADP + phosphate + CO2. It participates in steroid biosynthesis; cholesterol biosynthesis. In terms of biological role, catalyzes the ATP dependent decarboxylation of (R)-5-diphosphomevalonate to form isopentenyl diphosphate (IPP). Functions in the mevalonate (MVA) pathway leading to isopentenyl diphosphate (IPP), a key precursor for the biosynthesis of isoprenoids and sterol synthesis. The polypeptide is Diphosphomevalonate decarboxylase (MVD) (Homo sapiens (Human)).